Here is a 190-residue protein sequence, read N- to C-terminus: Adenylate kinase (190 aa).

12–17 (GSGKTT) is an ATP binding site. The NMP stretch occupies residues 34-63 (STGDLLREEVASGSEYGKTIDSFISKGNLV). AMP contacts are provided by residues threonine 35, arginine 40, 61–63 (NLV), 88–91 (GYPR), and glutamine 95. The interval 130 to 136 (GRARGAD) is LID. Arginine 131 serves as a coordination point for ATP. Residues arginine 133 and arginine 145 each contribute to the AMP site. Residue arginine 173 coordinates ATP.

This sequence belongs to the adenylate kinase family. In terms of assembly, monomer.

Its subcellular location is the cytoplasm. The enzyme catalyses AMP + ATP = 2 ADP. The protein operates within purine metabolism; AMP biosynthesis via salvage pathway; AMP from ADP: step 1/1. Functionally, catalyzes the reversible transfer of the terminal phosphate group between ATP and AMP. Plays an important role in cellular energy homeostasis and in adenine nucleotide metabolism. The protein is Adenylate kinase of Helicobacter hepaticus (strain ATCC 51449 / 3B1).